Here is a 468-residue protein sequence, read N- to C-terminus: Trigger factor (468 aa).

Residues G162–P243 form the PPIase FKBP-type domain. The interval N428–G468 is disordered. The span at V432–A453 shows a compositional bias: acidic residues. Over residues D454–G468 the composition is skewed to basic and acidic residues.

It belongs to the FKBP-type PPIase family. Tig subfamily.

The protein resides in the cytoplasm. It catalyses the reaction [protein]-peptidylproline (omega=180) = [protein]-peptidylproline (omega=0). Its function is as follows. Involved in protein export. Acts as a chaperone by maintaining the newly synthesized protein in an open conformation. Functions as a peptidyl-prolyl cis-trans isomerase. The chain is Trigger factor from Streptomyces coelicolor (strain ATCC BAA-471 / A3(2) / M145).